Here is a 379-residue protein sequence, read N- to C-terminus: Tryptophan--tRNA ligase, mitochondrial (379 aa).

Residues Q42 and 48–51 (HLGN) contribute to the ATP site. The 'HIGH' region signature appears at 43–51 (PTGCFHLGN). D184 lines the L-tryptophan pocket. Residues 196–198 (GDD), V235, 244–248 (KMSKS), and K247 contribute to the ATP site. A 'KMSKS' region motif is present at residues 244–248 (KMSKS).

The protein belongs to the class-I aminoacyl-tRNA synthetase family. Homodimer.

It localises to the mitochondrion matrix. It catalyses the reaction tRNA(Trp) + L-tryptophan + ATP = L-tryptophyl-tRNA(Trp) + AMP + diphosphate + H(+). Its function is as follows. Mitochondrial aminoacyl-tRNA synthetase that catalyzes the attachment of tryptophan to tRNA(Trp). The chain is Tryptophan--tRNA ligase, mitochondrial (MSW1) from Saccharomyces cerevisiae (strain ATCC 204508 / S288c) (Baker's yeast).